The following is a 541-amino-acid chain: Membrane protein insertase YidC (541 aa).

Helical transmembrane passes span 6–26, 349–369, 420–440, 457–477, and 500–520; these read NILLIGLLFVSFLLWQQWQAD, FVGNWGVAIILITLTVRGLLF, GGCLPILLQMPIFIALYWVLL, LSVQDPYYILPLLMGVSMFVM, and VIFTVFFLWFPSGLVLYWLVG.

It belongs to the OXA1/ALB3/YidC family. Type 1 subfamily. Interacts with the Sec translocase complex via SecD. Specifically interacts with transmembrane segments of nascent integral membrane proteins during membrane integration.

It is found in the cell inner membrane. Its function is as follows. Required for the insertion and/or proper folding and/or complex formation of integral membrane proteins into the membrane. Involved in integration of membrane proteins that insert both dependently and independently of the Sec translocase complex, as well as at least some lipoproteins. Aids folding of multispanning membrane proteins. In Shewanella sp. (strain MR-7), this protein is Membrane protein insertase YidC.